Reading from the N-terminus, the 468-residue chain is Zinc-regulated transporter 1 (468 aa).

A signal peptide spans 1–17; the sequence is MKFTHLFFIGLLTKVYT. Residues 18-185 are Extracellular-facing; it reads ETVTVLSTRS…VKRDYDIPLR (168 aa). Asn-57 and Asn-67 each carry an N-linked (GlcNAc...) asparagine glycan. A helical membrane pass occupies residues 186-206; that stretch reads IGLLFVILVTSGIGSFGPIVL. Topologically, residues 207 to 217 are cytoplasmic; that stretch reads KQFVNLSQENY. Residues 218-238 traverse the membrane as a helical segment; it reads IIVIIKQFGTGIIISTAFVHL. Residues 239 to 257 are Extracellular-facing; that stretch reads MTHAQLMWSNSCLKIKYEG. The helical transmembrane segment at 258 to 278 threads the bilayer; it reads TGASITMAGIFIAFIIEYIAL. Residues 279–314 lie on the Cytoplasmic side of the membrane; sequence RIVNARDTGKVDKKEIEETSSNEQSLHGISVNDKIS. A helical membrane pass occupies residues 315–335; the sequence is VMILEAGIIFHSILIGITLVV. Residues 336-338 are Extracellular-facing; it reads TDD. A helical membrane pass occupies residues 339-359; sequence VYFITLFIVIVFHQFFEGLAL. The Cytoplasmic portion of the chain corresponds to 360–374; that stretch reads SSRIISITNASLSTK. A helical transmembrane segment spans residues 375 to 395; that stretch reads LVMALMFALITPIGMAIGIGV. Topologically, residues 396–406 are extracellular; that stretch reads LNKFNGNDPST. Residues 407-427 traverse the membrane as a helical segment; it reads LIALGTLDSFSAGVLLWTGLI. The Cytoplasmic segment spans residues 428-447; it reads EMWSHDWLHGHLRNSSFVKT. A helical transmembrane segment spans residues 448–468; it reads TVALVSLILGMLLMSLLGNWA.

It belongs to the ZIP transporter (TC 2.A.5) family.

The protein localises to the cell membrane. The catalysed reaction is Zn(2+)(in) = Zn(2+)(out). Its function is as follows. Zinc transporter that acts with PRA1 in sequestration of zinc from host tissues during infection. The pH-regulated antigen 1 (PRA1) binds zinc from its environment and then reassociates with ZRT1 to acquire this essential metal. The polypeptide is Zinc-regulated transporter 1 (ZRT101) (Candida albicans (strain SC5314 / ATCC MYA-2876) (Yeast)).